The primary structure comprises 183 residues: Ribose 1,5-bisphosphate phosphokinase PhnN (183 aa).

This sequence belongs to the ribose 1,5-bisphosphokinase family.

The catalysed reaction is alpha-D-ribose 1,5-bisphosphate + ATP = 5-phospho-alpha-D-ribose 1-diphosphate + ADP. It functions in the pathway metabolic intermediate biosynthesis; 5-phospho-alpha-D-ribose 1-diphosphate biosynthesis; 5-phospho-alpha-D-ribose 1-diphosphate from D-ribose 5-phosphate (route II): step 3/3. Functionally, catalyzes the phosphorylation of ribose 1,5-bisphosphate to 5-phospho-D-ribosyl alpha-1-diphosphate (PRPP). This chain is Ribose 1,5-bisphosphate phosphokinase PhnN, found in Azotobacter vinelandii (strain DJ / ATCC BAA-1303).